We begin with the raw amino-acid sequence, 216 residues long: Acyl-homoserine-lactone synthase (216 aa).

The protein belongs to the autoinducer synthase family.

It catalyses the reaction a fatty acyl-[ACP] + S-adenosyl-L-methionine = an N-acyl-L-homoserine lactone + S-methyl-5'-thioadenosine + holo-[ACP] + H(+). Required for the synthesis of OHHL (N-(3-oxohexanoyl)-L-homoserine lactone), an autoinducer molecule which binds to a yet uncharacterized transcriptional regulator. This chain is Acyl-homoserine-lactone synthase (eagI), found in Enterobacter agglomerans (Erwinia herbicola).